The primary structure comprises 388 residues: Chaperone protein DnaJ (388 aa).

Residues 5–70 (DYYTTLNISN…KKRNLYDQYG (66 aa)) enclose the J domain. The CR-type zinc finger occupies 135-213 (GIKKEIRIPK…CFGQGRIKKS (79 aa)). Cys148, Cys151, Cys165, Cys168, Cys187, Cys190, Cys201, and Cys204 together coordinate Zn(2+). CXXCXGXG motif repeat units lie at residues 148–155 (CQSCYGYG), 165–172 (CTSCNGHG), 187–194 (CSTCRGTG), and 201–208 (CKICFGQG).

It belongs to the DnaJ family. As to quaternary structure, homodimer. The cofactor is Zn(2+).

It is found in the cytoplasm. In terms of biological role, participates actively in the response to hyperosmotic and heat shock by preventing the aggregation of stress-denatured proteins and by disaggregating proteins, also in an autonomous, DnaK-independent fashion. Unfolded proteins bind initially to DnaJ; upon interaction with the DnaJ-bound protein, DnaK hydrolyzes its bound ATP, resulting in the formation of a stable complex. GrpE releases ADP from DnaK; ATP binding to DnaK triggers the release of the substrate protein, thus completing the reaction cycle. Several rounds of ATP-dependent interactions between DnaJ, DnaK and GrpE are required for fully efficient folding. Also involved, together with DnaK and GrpE, in the DNA replication of plasmids through activation of initiation proteins. In Buchnera aphidicola subsp. Cinara cedri (strain Cc), this protein is Chaperone protein DnaJ.